The chain runs to 977 residues: Kinesin-like protein KIN-7L, chloroplastic (977 aa).

Over residues 1-12 the composition is skewed to polar residues; the sequence is MGSKQVSKTRNG. The disordered stretch occupies residues 1–66; sequence MGSKQVSKTR…PPKPLQSKEN (66 aa). Composition is skewed to low complexity over residues 22–31 and 38–54; these read SSASSTTSSS and SVDS…RSKP. Residues 66-385 form the Kinesin motor domain; sequence NVTVTVRFRP…LKFAHRAKHI (320 aa). 146 to 153 lines the ATP pocket; it reads GVTSSGKT. Residues 386–471 adopt a coiled-coil conformation; it reads EIQAAQNKII…LTKLILVSNK (86 aa). The interval 549–589 is disordered; it reads DSSLGGSSLSDKSSAVKSNSTPSTPQGEGSDFHTESRLSEG. A compositionally biased stretch (low complexity) spans 551-561; it reads SLGGSSLSDKS. The segment covering 563 to 575 has biased composition (polar residues); sequence AVKSNSTPSTPQG. Coiled coils occupy residues 626-688 and 732-942; these read MEIL…GKQI and IQEQ…LENE. A compositionally biased stretch (polar residues) spans 864 to 876; it reads SSVTTPQGKTGNL. Disordered regions lie at residues 864-891 and 958-977; these read SSVT…KEQE and AANS…HFGT. The span at 879 to 891 shows a compositional bias: basic and acidic residues; the sequence is GRRESVSKRKEQE. Residues 958–967 show a composition bias toward polar residues; the sequence is AANSGLSDSV. Residues 968-977 are compositionally biased toward basic and acidic residues; that stretch reads SETRIEHFGT.

Belongs to the TRAFAC class myosin-kinesin ATPase superfamily. Kinesin family. KIN-7 subfamily.

Its subcellular location is the plastid. It localises to the chloroplast. The chain is Kinesin-like protein KIN-7L, chloroplastic from Arabidopsis thaliana (Mouse-ear cress).